Consider the following 326-residue polypeptide: N-acetyl-gamma-glutamyl-phosphate reductase (326 aa).

Cys-155 is a catalytic residue.

This sequence belongs to the NAGSA dehydrogenase family. Type 1 subfamily.

The protein resides in the cytoplasm. The catalysed reaction is N-acetyl-L-glutamate 5-semialdehyde + phosphate + NADP(+) = N-acetyl-L-glutamyl 5-phosphate + NADPH + H(+). Its pathway is amino-acid biosynthesis; L-arginine biosynthesis; N(2)-acetyl-L-ornithine from L-glutamate: step 3/4. Its function is as follows. Catalyzes the NADPH-dependent reduction of N-acetyl-5-glutamyl phosphate to yield N-acetyl-L-glutamate 5-semialdehyde. This Shewanella frigidimarina (strain NCIMB 400) protein is N-acetyl-gamma-glutamyl-phosphate reductase.